Consider the following 394-residue polypeptide: uncharacterized protein (394 aa).

4 N-linked (GlcNAc...) asparagine glycosylation sites follow: N3, N14, N20, and N25. 6 consecutive transmembrane segments (helical) span residues 64 to 84 (AVGI…LVNI), 101 to 121 (FIWI…YIDV), 133 to 153 (IFSF…WHVI), 180 to 200 (IFVV…MGFF), 228 to 248 (VLLA…SFVY), and 256 to 276 (WVGM…QFLE). 2 N-linked (GlcNAc...) asparagine glycosylation sites follow: N283 and N286. The helical transmembrane segment at 291 to 311 (AGLVFGLGFCPPLILAYTVCI) threads the bilayer. The N-linked (GlcNAc...) asparagine glycan is linked to N344.

The protein resides in the membrane. This is an uncharacterized protein from Schizosaccharomyces pombe (strain 972 / ATCC 24843) (Fission yeast).